Consider the following 235-residue polypeptide: Small ribosomal subunit protein uS2 (235 aa).

It belongs to the universal ribosomal protein uS2 family.

The polypeptide is Small ribosomal subunit protein uS2 (rpsB) (Geobacillus stearothermophilus (Bacillus stearothermophilus)).